The primary structure comprises 141 residues: Putative antiporter subunit mnhB2 (141 aa).

The next 4 helical transmembrane spans lie at 10 to 30 (TVTK…FLAG), 35 to 55 (GGGF…FLAF), 70 to 90 (ILMI…MFFG), and 116 to 136 (VFEA…MLSI).

Belongs to the CPA3 antiporters (TC 2.A.63) subunit B family. As to quaternary structure, may form a heterooligomeric complex that consists of seven subunits: mnhA2, mnhB2, mnhC2, mnhD2, mnhE2, mnhF2 and mnhG2.

The protein resides in the cell membrane. The polypeptide is Putative antiporter subunit mnhB2 (mnhB2) (Staphylococcus saprophyticus subsp. saprophyticus (strain ATCC 15305 / DSM 20229 / NCIMB 8711 / NCTC 7292 / S-41)).